Here is a 239-residue protein sequence, read N- to C-terminus: Cell wall protein CWP1 (239 aa).

Positions 1-20 (MKFSTALSVALFALAKMVIA) are cleaved as a signal peptide. Residues 131–196 (GVAIRPTSKS…SSASSPTASV (66 aa)) form a disordered region. A compositionally biased stretch (low complexity) spans 142-196 (SVAADFSPSDSSSSSSASASSASASSSTKHSSSIESVETSTTVETSSASSPTASV). The stretch at 194 to 212 (ASVISQITDGQIQAPNTVY) is one PIR1/2/3 repeat. Residue N217 is the site of GPI-anchor amidated asparagine attachment. A propeptide spans 218–239 (AGAKAAVGMGAGALAVAAAYLL) (removed in mature form).

The protein belongs to the SRP1/TIP1 family. In terms of processing, extensively O-glycosylated. The GPI-anchor is attached to the protein in the endoplasmic reticulum and serves to target the protein to the cell surface. There, the glucosamine-inositol phospholipid moiety is cleaved off and the GPI-modified mannoprotein is covalently attached via its lipidless GPI glycan remnant to the 1,6-beta-glucan of the outer cell wall layer. Post-translationally, covalently linked to beta-1,3-glucan of the inner cell wall layer via an alkali-sensitive ester linkage between the gamma-carboxyl group of glutamic acids, arising from a specific glutamine within the PIR1/2/3 repeat, and hydroxyl groups of glucoses of beta-1,3-glucan chains. The alkali-sensitive linkage is induced by low pH.

Its subcellular location is the secreted. The protein localises to the cell wall. It is found in the membrane. Its function is as follows. Component of the cell wall. This is Cell wall protein CWP1 (CWP1) from Saccharomyces cerevisiae (strain ATCC 204508 / S288c) (Baker's yeast).